Reading from the N-terminus, the 382-residue chain is Putative 12-oxophytodienoate reductase 3 (382 aa).

FMN contacts are provided by residues 37–39 (PLT), alanine 70, and glutamine 112. Polar residues predominate over residues 120–138 (STNDQQPNGQAPISSTDKQ). Residues 120–147 (STNDQQPNGQAPISSTDKQITPDDSHTV) form a disordered region. 184–187 (HGAH) lines the substrate pocket. Tyrosine 189 functions as the Proton donor in the catalytic mechanism. Arginine 236 serves as a coordination point for FMN. Arginine 277 contributes to the substrate binding site. Residues glycine 307 and 328–329 (GR) each bind FMN.

The protein belongs to the NADH:flavin oxidoreductase/NADH oxidase family. It depends on FMN as a cofactor.

Its function is as follows. Putative oxophytodienoate reductase that may be involved in the biosynthesis or metabolism of oxylipin signaling molecules. This chain is Putative 12-oxophytodienoate reductase 3 (OPR3), found in Oryza sativa subsp. japonica (Rice).